The primary structure comprises 101 residues: MSSFILKFLWLEKSVAVGLDQKIGDRTTPVTEFFFWPQHDAWEEMKNFLEDKSWIDQSEVVILLNQITEVINYWQEKTELQKRDISHLTEKFPNVVFVGFD.

The protein belongs to the chloroplast-specific ribosomal protein cS23 family. In terms of assembly, part of the 30S ribosomal subunit.

It is found in the plastid. The protein resides in the chloroplast. In terms of biological role, probably a ribosomal protein or a ribosome-associated protein. The chain is Small ribosomal subunit protein cS23 (ycf65) from Euglena stellata.